The following is a 450-amino-acid chain: Tubulin beta-2 chain (450 aa).

Residues Gln-11, Glu-69, Ser-138, Gly-142, Thr-143, Gly-144, Asn-204, and Asn-226 each contribute to the GTP site. Glu-69 is a Mg(2+) binding site. A disordered region spans residues 428 to 450; sequence ATAEDDVDGYAEGEAGETYESEQ. Over residues 429 to 450 the composition is skewed to acidic residues; sequence TAEDDVDGYAEGEAGETYESEQ.

It belongs to the tubulin family. In terms of assembly, dimer of alpha and beta chains. A typical microtubule is a hollow water-filled tube with an outer diameter of 25 nm and an inner diameter of 15 nm. Alpha-beta heterodimers associate head-to-tail to form protofilaments running lengthwise along the microtubule wall with the beta-tubulin subunit facing the microtubule plus end conferring a structural polarity. Microtubules usually have 13 protofilaments but different protofilament numbers can be found in some organisms and specialized cells. Mg(2+) serves as cofactor. In terms of processing, cleaved by caspase ced-3 in vitro.

It localises to the cytoplasm. The protein localises to the cytoskeleton. Its function is as follows. Tubulin is the major constituent of microtubules, a cylinder consisting of laterally associated linear protofilaments composed of alpha- and beta-tubulin heterodimers. Microtubules grow by the addition of GTP-tubulin dimers to the microtubule end, where a stabilizing cap forms. Below the cap, tubulin dimers are in GDP-bound state, owing to GTPase activity of alpha-tubulin. Required for the normal dynamic behavior of the non-centrosomal microtubules in the epidermal syncytium. Involved in the redistribution of microtubule end-binding protein EB1/ebp-2 caused by wounding. Required to modulate expression in the epidermis of antimicrobial peptides, such as nlp-29, after wounding, or fungal infection. This chain is Tubulin beta-2 chain (tbb-2), found in Caenorhabditis elegans.